The primary structure comprises 444 residues: L-seryl-tRNA(Sec) selenium transferase (444 aa).

Lys-284 bears the N6-(pyridoxal phosphate)lysine mark.

This sequence belongs to the SelA family. The cofactor is pyridoxal 5'-phosphate.

The protein localises to the cytoplasm. It carries out the reaction L-seryl-tRNA(Sec) + selenophosphate + H(+) = L-selenocysteinyl-tRNA(Sec) + phosphate. It functions in the pathway aminoacyl-tRNA biosynthesis; selenocysteinyl-tRNA(Sec) biosynthesis; selenocysteinyl-tRNA(Sec) from L-seryl-tRNA(Sec) (bacterial route): step 1/1. In terms of biological role, converts seryl-tRNA(Sec) to selenocysteinyl-tRNA(Sec) required for selenoprotein biosynthesis. This is L-seryl-tRNA(Sec) selenium transferase from Wolinella succinogenes (strain ATCC 29543 / DSM 1740 / CCUG 13145 / JCM 31913 / LMG 7466 / NCTC 11488 / FDC 602W) (Vibrio succinogenes).